The sequence spans 348 residues: Mannonate dehydratase (348 aa).

Belongs to the mannonate dehydratase family. Requires Fe(2+) as cofactor. It depends on Mn(2+) as a cofactor.

It carries out the reaction D-mannonate = 2-dehydro-3-deoxy-D-gluconate + H2O. The protein operates within carbohydrate metabolism; pentose and glucuronate interconversion. Its function is as follows. Catalyzes the dehydration of D-mannonate. This chain is Mannonate dehydratase, found in Staphylococcus haemolyticus (strain JCSC1435).